Consider the following 113-residue polypeptide: Head virion protein G6P (113 aa).

The next 3 membrane-spanning stretches (helical) occupy residues 13 to 33 (FIGW…TLGI), 36 to 56 (IALA…LLVS), and 69 to 89 (IASA…YAIF).

The protein belongs to the inovirus G6P protein family. In terms of assembly, interacts with G3P; this interaction is required for proper integration of G3P and G6P into the virion.

The protein localises to the virion. It localises to the host membrane. Plays essential roles both in the entry of the viral genome into the bacterial host and in budding process. The formation of the G3P-G6P complex termed adsorption complex is essential for correct termination of filamentous phage assembly. This Escherichia phage If1 (Bacteriophage If1) protein is Head virion protein G6P (VI).